The following is a 257-amino-acid chain: Thioredoxin-dependent peroxide reductase, mitochondrial (257 aa).

The transit peptide at 1–62 directs the protein to the mitochondrion; sequence MAATAGRLFR…FAFSTSSSYH (62 aa). The region spanning 64–222 is the Thioredoxin domain; it reads PAVTQHAPYF…TLRLVKAFQF (159 aa). K84 is modified (N6-succinyllysine). K92 carries the N6-acetyllysine; alternate modification. Position 92 is an N6-succinyllysine; alternate (K92). Catalysis depends on C109, which acts as the Cysteine sulfenic acid (-SOH) intermediate. T147 carries the phosphothreonine modification.

This sequence belongs to the peroxiredoxin family. AhpC/Prx1 subfamily. Homodimer; disulfide-linked, upon oxidation. 6 homodimers assemble to form a ring-like dodecamer. Interacts with NEK6. Interacts with LRRK2. Interacts with MAP3K13. Interacts with RPS6KC1 (via PX domain). Phosphorylated by LRRK2; phosphorylation reduces perodixase activity. In terms of processing, the enzyme can be inactivated by further oxidation of the cysteine sulfenic acid (C(P)-SOH) to sulphinic acid (C(P)-SO2H) and sulphonic acid (C(P)-SO3H) instead of its condensation to a disulfide bond. Post-translationally, S-palmitoylated. In terms of tissue distribution, predominantly expressed in adrenal cortex. Also detected in liver, renal cortex and medulla, and adrenal medulla (at protein level).

Its subcellular location is the mitochondrion matrix. The protein resides in the cytoplasm. It localises to the early endosome. The enzyme catalyses a hydroperoxide + [thioredoxin]-dithiol = an alcohol + [thioredoxin]-disulfide + H2O. In terms of biological role, thiol-specific peroxidase that catalyzes the reduction of hydrogen peroxide and organic hydroperoxides to water and alcohols, respectively. Plays a role in cell protection against oxidative stress by detoxifying peroxides. Acts synergistically with MAP3K13 to regulate the activation of NF-kappa-B in the cytosol. Required for the maintenance of physical strength. The protein is Thioredoxin-dependent peroxide reductase, mitochondrial (PRDX3) of Bos taurus (Bovine).